We begin with the raw amino-acid sequence, 157 residues long: Cyclic pyranopterin monophosphate synthase (157 aa).

Substrate contacts are provided by residues 74-76 and 111-112; these read MCH and ME. Asp126 is a catalytic residue.

This sequence belongs to the MoaC family. As to quaternary structure, homohexamer; trimer of dimers.

The enzyme catalyses (8S)-3',8-cyclo-7,8-dihydroguanosine 5'-triphosphate = cyclic pyranopterin phosphate + diphosphate. Its pathway is cofactor biosynthesis; molybdopterin biosynthesis. Functionally, catalyzes the conversion of (8S)-3',8-cyclo-7,8-dihydroguanosine 5'-triphosphate to cyclic pyranopterin monophosphate (cPMP). This Carboxydothermus hydrogenoformans (strain ATCC BAA-161 / DSM 6008 / Z-2901) protein is Cyclic pyranopterin monophosphate synthase.